We begin with the raw amino-acid sequence, 207 residues long: MRLIRMLLATALTFSVIPAHADGKDVARLTQLLEKSQTLTARFSQLTLDGGGTQLQETTGEMALQRPGLFNWHTDAPQEQLMVSDGKKVSLWDPDLEQVTIKKLDQRLTQTPALLLSGDVSKISESFDITAKEAGGVIDFMLKPKTKDTLFDSLRLSFRNGIINDMQLIDSVGQRTNILFTGVKANESIAASKFQFQIPKGADVIQE.

A signal peptide spans 1-21 (MRLIRMLLATALTFSVIPAHA).

It belongs to the LolA family. Monomer.

It localises to the periplasm. In terms of biological role, participates in the translocation of lipoproteins from the inner membrane to the outer membrane. Only forms a complex with a lipoprotein if the residue after the N-terminal Cys is not an aspartate (The Asp acts as a targeting signal to indicate that the lipoprotein should stay in the inner membrane). This is Outer-membrane lipoprotein carrier protein from Pseudomonas syringae pv. tomato (strain ATCC BAA-871 / DC3000).